The primary structure comprises 307 residues: Elongation factor Ts (307 aa).

Positions 80–83 (TDFV) are involved in Mg(2+) ion dislocation from EF-Tu.

It belongs to the EF-Ts family.

It is found in the cytoplasm. Functionally, associates with the EF-Tu.GDP complex and induces the exchange of GDP to GTP. It remains bound to the aminoacyl-tRNA.EF-Tu.GTP complex up to the GTP hydrolysis stage on the ribosome. This chain is Elongation factor Ts, found in Clostridium botulinum (strain Loch Maree / Type A3).